Here is a 1496-residue protein sequence, read N- to C-terminus: DENN domain-containing protein 4B (1496 aa).

The MABP domain maps to 44–203 (AEPITDVAVI…AVYLCYKVGL (160 aa)). The region spanning 195 to 369 (VYLCYKVGLA…NVPFPSPQRP (175 aa)) is the uDENN domain. The 137-residue stretch at 390 to 526 (PLPLSGASFL…PYKVLLATLT (137 aa)) folds into the cDENN domain. The dDENN domain maps to 528 to 644 (LYQQLDQTYT…ECSFGSARHA (117 aa)). Positions 720–744 (QPGALPVPGPSRSAPSSPAPRRTKQ) are disordered. Low complexity predominate over residues 729-739 (PSRSAPSSPAP). PPR repeat units lie at residues 775 to 811 (WFLC…VVLP) and 812 to 846 (DEVC…GIVP). Disordered regions lie at residues 891 to 970 (LRER…ARGA), 995 to 1055 (VPWH…TPRR), 1067 to 1119 (PSRH…GSEW), and 1205 to 1227 (SRPS…PVPG). The segment covering 896–912 (QQQQQQQQQQQQQQQEQ) has biased composition (low complexity). 2 stretches are compositionally biased toward polar residues: residues 913-924 (VSAHQEAGSSQA) and 935-944 (RPLQRQTTWA). At S953 the chain carries Phosphoserine. Residues 1075-1090 (RIPPPELPPDLPPPAR) show a composition bias toward pro residues. S1092 is subject to Phosphoserine. The span at 1105–1119 (GSTASESSASLGSEW) shows a compositional bias: low complexity.

The protein resides in the golgi apparatus. Its function is as follows. Guanine nucleotide exchange factor (GEF) which may activate RAB10. Promotes the exchange of GDP to GTP, converting inactive GDP-bound Rab proteins into their active GTP-bound form. The polypeptide is DENN domain-containing protein 4B (DENND4B) (Homo sapiens (Human)).